The chain runs to 266 residues: Mitochondrial intermembrane space import and assembly protein 40 (266 aa).

Residues 1–28 (MFRQVSVRALRRAAGRSVCASRAQMVRH) constitute a mitochondrion transit peptide. Residues 29 to 44 (SSTLGGGKGSYNLDMP) lie on the Mitochondrial matrix side of the membrane. The chain crosses the membrane as a helical; Signal-anchor for type II membrane protein span at residues 45-61 (ALALAAGVTLLAGYMVY). Over 62–266 (PRAPKAKQAA…AESAKSDEGH (205 aa)) the chain is Mitochondrial intermembrane. Polar residues predominate over residues 87-98 (ASLQASAPVQAT). The segment at 87–180 (ASLQASAPVQ…GQQGAYNPDT (94 aa)) is disordered. Composition is skewed to low complexity over residues 130-157 (AEVG…AAEA) and 165-175 (AGEAAQGQQGA). 3 cysteine pairs are disulfide-bonded: cysteine 187–cysteine 189, cysteine 198–cysteine 231, and cysteine 208–cysteine 221. Residues 195–239 (HGPCGEEFKAAFACFVYSEAEPKGIDCVEKFQVMQDCFRQHPEHY) form the CHCH domain. Short sequence motifs (cx9C motif) lie at residues 198–208 (CGEEFKAAFAC) and 221–231 (CVEKFQVMQDC). The interval 242–266 (QLESEEQAVRETEAAAESAKSDEGH) is disordered. Over residues 248–266 (QAVRETEAAAESAKSDEGH) the composition is skewed to basic and acidic residues.

Monomer. The cofactor is Cu(2+). Zn(2+) serves as cofactor.

The protein resides in the mitochondrion inner membrane. In terms of biological role, required for the import and folding of small cysteine-containing proteins (small Tim) in the mitochondrial intermembrane space (IMS). Forms a redox cycle with ERV1 that involves a disulfide relay system. Precursor proteins to be imported into the IMS are translocated in their reduced form into the mitochondria. The oxidized form of MIA40 forms a transient intermolecular disulfide bridge with the reduced precursor protein, resulting in oxidation of the precursor protein that now contains an intramolecular disulfide bond and is able to undergo folding in the IMS. This Eremothecium gossypii (strain ATCC 10895 / CBS 109.51 / FGSC 9923 / NRRL Y-1056) (Yeast) protein is Mitochondrial intermembrane space import and assembly protein 40 (MIA40).